The following is a 370-amino-acid chain: Molybdenum import ATP-binding protein ModC (370 aa).

Positions serine 2 to glycine 233 constitute an ABC transporter domain. Glycine 31–threonine 38 serves as a coordination point for ATP. Residues glycine 293–asparagine 359 enclose the Mop domain.

Belongs to the ABC transporter superfamily. Molybdate importer (TC 3.A.1.8) family. As to quaternary structure, the complex is composed of two ATP-binding proteins (ModC), two transmembrane proteins (ModB) and a solute-binding protein (ModA).

It localises to the cell inner membrane. The enzyme catalyses molybdate(out) + ATP + H2O = molybdate(in) + ADP + phosphate + H(+). Functionally, part of the ABC transporter complex ModABC involved in molybdenum import. Responsible for energy coupling to the transport system. The sequence is that of Molybdenum import ATP-binding protein ModC from Mesorhizobium japonicum (strain LMG 29417 / CECT 9101 / MAFF 303099) (Mesorhizobium loti (strain MAFF 303099)).